A 422-amino-acid chain; its full sequence is UDP-N-acetylglucosamine 1-carboxyvinyltransferase (422 aa).

Residue 22 to 23 (KN) coordinates phosphoenolpyruvate. Arg-93 lines the UDP-N-acetyl-alpha-D-glucosamine pocket. The active-site Proton donor is the Cys-117. A 2-(S-cysteinyl)pyruvic acid O-phosphothioketal modification is found at Cys-117. UDP-N-acetyl-alpha-D-glucosamine is bound by residues 122 to 126 (RPVDQ), Asp-309, and Ile-331.

The protein belongs to the EPSP synthase family. MurA subfamily.

The protein localises to the cytoplasm. It catalyses the reaction phosphoenolpyruvate + UDP-N-acetyl-alpha-D-glucosamine = UDP-N-acetyl-3-O-(1-carboxyvinyl)-alpha-D-glucosamine + phosphate. The protein operates within cell wall biogenesis; peptidoglycan biosynthesis. Cell wall formation. Adds enolpyruvyl to UDP-N-acetylglucosamine. The protein is UDP-N-acetylglucosamine 1-carboxyvinyltransferase of Delftia acidovorans (strain DSM 14801 / SPH-1).